The following is a 128-amino-acid chain: Aspartate 1-decarboxylase (128 aa).

The active-site Schiff-base intermediate with substrate; via pyruvic acid is Ser25. Position 25 is a pyruvic acid (Ser) (Ser25). Thr57 provides a ligand contact to substrate. Tyr58 functions as the Proton donor in the catalytic mechanism. Residue 73-75 coordinates substrate; it reads GAA.

It belongs to the PanD family. In terms of assembly, heterooctamer of four alpha and four beta subunits. Pyruvate serves as cofactor. Post-translationally, is synthesized initially as an inactive proenzyme, which is activated by self-cleavage at a specific serine bond to produce a beta-subunit with a hydroxyl group at its C-terminus and an alpha-subunit with a pyruvoyl group at its N-terminus.

The protein resides in the cytoplasm. It carries out the reaction L-aspartate + H(+) = beta-alanine + CO2. The protein operates within cofactor biosynthesis; (R)-pantothenate biosynthesis; beta-alanine from L-aspartate: step 1/1. Its function is as follows. Catalyzes the pyruvoyl-dependent decarboxylation of aspartate to produce beta-alanine. This is Aspartate 1-decarboxylase from Chlorobaculum parvum (strain DSM 263 / NCIMB 8327) (Chlorobium vibrioforme subsp. thiosulfatophilum).